Here is a 324-residue protein sequence, read N- to C-terminus: MLSVNLKSLPIVENMIEKAEEMNIEVIKLENGATVLDCGVNVMGSIEAGKAFTKICLGGLAHVGVSIAGTVSDEMVLPCVKVKTSHPAIATLGSQKAGWTINIGKFFAMGSGPARALAKIPKATYEEINYEDNADVAILCLEASQLPNEEVAEFVAEKCGVDVSKVYLLVAPTSSLVGSIQISGRVVENGTYKMLEALHFDVNKVKFAAGIAPVAPIIGDDLAMMGATNDMVLYGGRTYYYIESDENDDVEALCKALPSCSSQDYGKPFLETFKAANYDFYKIDKGMFAPAVVVINDMRTGKLVTYGKPHVDVLKKSLGYKELE.

Belongs to the MCH family.

It localises to the cytoplasm. It carries out the reaction 5,10-methenyl-5,6,7,8-tetrahydromethanopterin + H2O = N(5)-formyl-5,6,7,8-tetrahydromethanopterin + H(+). Its pathway is one-carbon metabolism; methanogenesis from CO(2); 5,10-methenyl-5,6,7,8-tetrahydromethanopterin from CO(2): step 3/3. Its function is as follows. Catalyzes the reversible interconversion of 5-formyl-H(4)MPT to methenyl-H(4)MPT(+). This is Methenyltetrahydromethanopterin cyclohydrolase from Methanococcus aeolicus (strain ATCC BAA-1280 / DSM 17508 / OCM 812 / Nankai-3).